We begin with the raw amino-acid sequence, 633 residues long: Shootin-1 (633 aa).

Met1 carries the post-translational modification N-acetylmethionine. Phosphoserine occurs at positions 3 and 4. Residues 7–353 (EKQLQLITSL…RVNQSENSVP (347 aa)) adopt a coiled-coil conformation. Ser101 and Ser249 each carry phosphoserine; by PAK1. The tract at residues 343–508 (KRVNQSENSV…LATSESKSMP (166 aa)) is disordered. Positions 352-369 (VPPPPPPPPPLPPPPPNP) are enriched in pro residues. The residue at position 375 (Ser375) is a Phosphoserine. Basic and acidic residues predominate over residues 403-418 (TDLKRQAVEEMMDRIK). The segment covering 456–465 (LNKSTSSRSL) has biased composition (polar residues). Ser473 is subject to Phosphoserine. Thr487 is subject to Phosphothreonine. Polar residues predominate over residues 490 to 505 (ADSSSPTGILATSESK). At Ser494 the chain carries Phosphoserine. Thr496 bears the Phosphothreonine mark. Phosphoserine is present on residues Ser506 and Ser515. Residues 525-633 (TLEAEFNNPC…KTGETDSSNC (109 aa)) are disordered. Thr537 carries the post-translational modification Phosphothreonine. Residues 550–559 (CTNSKVTFQP) show a composition bias toward polar residues. The segment covering 590 to 621 (PQTKDQAAEKDPTQCKEEERGETQPEFKEDSS) has biased composition (basic and acidic residues).

This sequence belongs to the shootin family. In terms of assembly, interacts with PFN2. Interacts (via N-terminus) with KIF20B; this interaction is direct and promotes the association of SHTN1 to microtubules in primary neurons. Associates with microtubule. Interacts with L1CAM; this interaction occurs in axonal growth cones. Interacts with actin filament retrograde flow; this interaction is enhanced in a netrin-1- and PAK1-dependent manner and promotes F-actin-substrate coupling and concomitant formation of traction forces at axonal growth cones. Interacts with RUFY3. Phosphorylated on Ser-101 and Ser-249 by PAK1 through a CDC42- and RAC1-dependent signaling pathway, which enhances its association with F-actin retrograde flow in filopodia and lamellipodia of axonal growth cones. Phosphorylation on Ser-101 and Ser-249 is increased by netrin-1. As to expression, brain-specific (at protein level). Expressed in hippocampal neurons.

The protein localises to the perikaryon. The protein resides in the cell projection. It is found in the axon. Its subcellular location is the growth cone. It localises to the cytoplasm. The protein localises to the cytoskeleton. The protein resides in the filopodium. It is found in the lamellipodium. Functionally, involved in the generation of internal asymmetric signals required for neuronal polarization and neurite outgrowth. Mediates netrin-1-induced F-actin-substrate coupling or 'clutch engagement' within the axon growth cone through activation of CDC42, RAC1 and PAK1-dependent signaling pathway, thereby converting the F-actin retrograde flow into traction forces, concomitantly with filopodium extension and axon outgrowth. Plays a role in cytoskeletal organization by regulating the subcellular localization of phosphoinositide 3-kinase (PI3K) activity at the axonal growth cone. Also plays a role in regenerative neurite outgrowth. In the developing cortex, cooperates with KIF20B to promote both the transition from the multipolar to the bipolar stage and the radial migration of cortical neurons from the ventricular zone toward the superficial layer of the neocortex. Involved in the accumulation of phosphatidylinositol 3,4,5-trisphosphate (PIP3) in the growth cone of primary hippocampal neurons. This Rattus norvegicus (Rat) protein is Shootin-1.